We begin with the raw amino-acid sequence, 146 residues long: MRNEMNLQFSALSQNESFARVTVAAFIAQLDPTMEELTEIKTVVSEAVTNAIIHGYEGNAEGVVYISVILEEAMVKLTIRDEGIGIFNLDEARQPLFTTKPELERSGMGFTIMENFMDEVEVISNESFGTTIHLTKYLSNSNALCN.

This sequence belongs to the anti-sigma-factor family.

It carries out the reaction L-seryl-[protein] + ATP = O-phospho-L-seryl-[protein] + ADP + H(+). The catalysed reaction is L-threonyl-[protein] + ATP = O-phospho-L-threonyl-[protein] + ADP + H(+). Binds to sigma F and blocks its ability to form an RNA polymerase holoenzyme (E-sigma F). Phosphorylates SpoIIAA on a serine residue. This phosphorylation may enable SpoIIAA to act as an anti-anti-sigma factor that counteracts SpoIIAB and thus releases sigma F from inhibition. This is Anti-sigma F factor from Bacillus anthracis (strain A0248).